A 393-amino-acid chain; its full sequence is uncharacterized protein (393 aa).

The next 8 membrane-spanning stretches (helical) occupy residues 15 to 35 (IVAF…VTIF), 56 to 76 (WGWI…NVII), 86 to 106 (FYAS…FQIV), 131 to 151 (AVLI…LITW), 176 to 196 (LSLT…VIAF), 253 to 273 (LLAN…VFMI), 289 to 309 (LIDL…IPVA), and 349 to 369 (VYLP…QVIW).

The protein localises to the cell membrane. This is an uncharacterized protein from Mycoplasma genitalium (strain ATCC 33530 / DSM 19775 / NCTC 10195 / G37) (Mycoplasmoides genitalium).